Here is a 1402-residue protein sequence, read N- to C-terminus: Eukaryotic translation initiation factor 4 gamma 1 (1402 aa).

Disordered stretches follow at residues 1 to 123 (MSGA…SPEP) and 165 to 402 (HEPN…YEYK). Residues T11 and T27 each carry the phosphothreonine modification. Residues 53–64 (GPEHSPSESQPS) are compositionally biased toward low complexity. Positions 65–76 (SPSPTPSPPPIL) are enriched in pro residues. The residue at position 120 (S120) is a Phosphoserine. Low complexity predominate over residues 238-251 (ASATPPAVPSATPA). A compositionally biased stretch (acidic residues) spans 261 to 275 (QEEEGEEEEEEEEGE). Composition is skewed to basic and acidic residues over residues 280 to 290 (ESDKGGEDLHP) and 324 to 340 (KELN…DAFK). Residues 359–370 (PTPESEGSSGPS) show a composition bias toward low complexity. Over residues 379 to 388 (WDAKEDKIHN) the composition is skewed to basic and acidic residues. The residue at position 452 (T452) is a Phosphothreonine. Disordered stretches follow at residues 476-517 (ANLG…PPKG), 536-563 (AEKA…GSKT), 600-636 (SKGS…ATTE), and 828-1028 (MAKG…KREA). Residues 479–488 (GRPALSSRGP) are compositionally biased toward low complexity. Omega-N-methylarginine is present on residues R490 and R499. A compositionally biased stretch (basic and acidic residues) spans 547–563 (TAADKDRGEEDADGSKT). The MIF4G domain maps to 567-793 (FRRVRSILNK…QDVLDLRQSN (227 aa)). Residues 602-621 (GSLTSSLRRPFQNPTSQWPS) show a composition bias toward polar residues. The residue at position 832 (S832) is a Phosphoserine. Omega-N-methylarginine occurs at positions 836 and 846. A phosphoserine mark is found at S881 and S896. Positions 892-913 (GGRLSWGKGSSGSGAKPSDAAS) are enriched in low complexity. N6-acetyllysine is present on K899. The segment covering 918–937 (PATSTLNRFSALQQAVPTES) has biased composition (polar residues). Residues S948 and S950 each carry the phosphoserine modification. The segment covering 949-981 (LSRERGGKAGEPRRRLERSERGGDRGDRLDRAR) has biased composition (basic and acidic residues). S988 carries the post-translational modification Phosphoserine; by PKC/PRKCA. Basic and acidic residues predominate over residues 989-1028 (FSKEVEERSRERPSQPEGLRKAASLTEDRDRGRDAAKREA). S990, S997, and S1012 each carry phosphoserine. T1014 carries the phosphothreonine modification. Residues S1034 and S1041 each carry the phosphoserine modification. The MI domain occupies 1044-1166 (ELEKKSKAII…PMGELFREIT (123 aa)). The W2 domain maps to 1231-1401 (EESEAPGQRA…REVEEEESDH (171 aa)). A Phosphoserine modification is found at S1399.

This sequence belongs to the eukaryotic initiation factor 4G family. As to quaternary structure, eIF4F is a multi-subunit complex, the composition of which varies with external and internal environmental conditions. It is composed of at least EIF4A, EIF4E (cap-binding) and EIF4G1/EIF4G3. Interacts with eIF3 complex, mutually exclusive with EIF4A1 or EIF4A2, EIF4E and through its N-terminus with PABPC1. Interacts with EIF4E or with EIF1 (mutually exclusive) through a common binding site. Interacts through its C-terminus with the serine/threonine kinases MKNK1, and with MKNK2. Appears to act as a scaffold protein, holding these enzymes in place to phosphorylate EIF4E. Non-phosphorylated EIF4EBP1 competes with EIF4G1/EIF4G3 to interact with EIF4E; insulin stimulated MAP-kinase (MAPK1 and MAPK3) phosphorylation of EIF4EBP1 causes dissociation of the complex allowing EIF4G1/EIF4G3 to bind and consequent initiation of translation. EIF4G1/EIF4G3 interacts with PABPC1 to bring about circularization of the mRNA. Interacts with EIF4E3. Interacts with CIRBP and MIF4GD. Interacts with RBM4. Interacts with HNRNPD/AUF1; the interaction requires RNA. Interacts with DDX3X; the interaction requires RNA. Interacts with DAZAP2. Phosphorylated at multiple sites in vivo. Phosphorylation at Ser-988 by PRKCA induces binding to MKNK1.

The protein resides in the cytoplasm. It is found in the nucleus. The protein localises to the stress granule. In terms of biological role, component of the protein complex eIF4F, which is involved in the recognition of the mRNA cap, ATP-dependent unwinding of 5'-terminal secondary structure and recruitment of mRNA to the ribosome. Exists in two complexes, either with EIF1 or with EIF4E (mutually exclusive). Together with EIF1, is required for leaky scanning, in particular for avoiding cap-proximal start codon. Together with EIF4E, antagonizes the scanning promoted by EIF1-EIF4G1 and locates the start codon (through a TISU element) without scanning. As a member of the eIF4F complex, required for endoplasmic reticulum stress-induced ATF4 mRNA translation. The protein is Eukaryotic translation initiation factor 4 gamma 1 (EIF4G1) of Oryctolagus cuniculus (Rabbit).